We begin with the raw amino-acid sequence, 336 residues long: Galactose/methyl galactoside import permease protein MglC (336 aa).

A run of 8 helical transmembrane segments spans residues 17–37 (AIYF…PTFL), 53–73 (LIIA…LSAG), 107–127 (VVIL…GLVI), 128–148 (AYLN…IYGF), 181–201 (FKLS…WIMW), 231–251 (LVAI…LEAG), 257–277 (TNNL…VGGV), and 306–326 (IGVN…LAVA).

Belongs to the binding-protein-dependent transport system permease family. AraH/RbsC subfamily. In terms of assembly, the complex is composed of one ATP-binding protein (MglA), two transmembrane proteins (MglC) and a solute-binding protein (MglB).

It is found in the cell inner membrane. Functionally, part of the ABC transporter complex MglABC involved in galactose/methyl galactoside import. Probably responsible for the translocation of the substrate across the membrane. This chain is Galactose/methyl galactoside import permease protein MglC (mglC), found in Haemophilus influenzae (strain ATCC 51907 / DSM 11121 / KW20 / Rd).